We begin with the raw amino-acid sequence, 59 residues long: Beta-defensin 134 (59 aa).

The first 19 residues, 1–19 (MKPLLVVFVFLFLWDPVLA), serve as a signal peptide directing secretion. 3 cysteine pairs are disulfide-bonded: Cys-25/Cys-51, Cys-31/Cys-45, and Cys-35/Cys-52.

This sequence belongs to the beta-defensin family.

It is found in the secreted. Its function is as follows. Has antibacterial activity. The sequence is that of Beta-defensin 134 (DEFB134) from Pan troglodytes (Chimpanzee).